The primary structure comprises 204 residues: Oocyte-specific homeobox protein 1 (204 aa).

Positions 28–73 are disordered; sequence EPARNLAFQMRQSPLVTPGSTTKSSLSVPERNLLKQESQGPSRQSG. 2 stretches are compositionally biased toward polar residues: residues 37–54 and 62–72; these read MRQS…SSLS and KQESQGPSRQS. Residues 94 to 153 constitute a DNA-binding region (homeobox); it reads FRKERTVYTKEQQGLLQKHFDECQYPNKKKIVELALSVGVTKREIKIWFKNNRAKYRRMN.

The protein belongs to the paired homeobox family. Obox subfamily. Specifically expressed in oocytes and early embryos.

It is found in the nucleus. Transcription factor required for zygotic genome activation (ZGA), a critical event in early embryonic development during which the developmental control passes from maternally provided mRNAs to the expression of the zygotic genome after fertilization. Together with other Obox family members, required in early two-cell stage embryos to kick-start the major ZGA wave by facilitating RNA Polymerase II 'pre-configuration', during which RNA Polymerase II relocates from the initial one-cell stage binding targets to ZGA gene promoters and distal enhancers. Mechanistically, promotes recruitment of RNA Polymerase II from (CG-rich) non-ZGA genes to (CG-poor) ZGA genes at the two-cell stage. Binds to regulatory DNA sequences containing a 5'-ACNCCTTTAATCCCAG-3' sequence motif. Most maternal and zygotic Obox family proteins can compensate for one another. In addition to its role in ZGA, promotes embryonic stem cell pluripotency. This is Oocyte-specific homeobox protein 1 from Mus musculus (Mouse).